A 353-amino-acid chain; its full sequence is Thiamine-phosphate synthase (353 aa).

Residues 1-128 (MESMPVAPST…ARTAAAVRYA (128 aa)) are unknown. The segment at 129 to 353 (LYDHEVRILE…ASRQLLDLLT (225 aa)) is thiamine-phosphate synthase. Residues 185-189 (QYRRK) and Asn217 contribute to the 4-amino-2-methyl-5-(diphosphooxymethyl)pyrimidine site. Mg(2+) contacts are provided by Asp218 and Asp237. Ser256 contacts 4-amino-2-methyl-5-(diphosphooxymethyl)pyrimidine. 282 to 284 (TAT) is a 2-[(2R,5Z)-2-carboxy-4-methylthiazol-5(2H)-ylidene]ethyl phosphate binding site. Lys285 serves as a coordination point for 4-amino-2-methyl-5-(diphosphooxymethyl)pyrimidine. 2-[(2R,5Z)-2-carboxy-4-methylthiazol-5(2H)-ylidene]ethyl phosphate contacts are provided by residues Gly312 and 332–333 (VS).

This sequence belongs to the thiamine-phosphate synthase family. Requires Mg(2+) as cofactor.

It catalyses the reaction 2-[(2R,5Z)-2-carboxy-4-methylthiazol-5(2H)-ylidene]ethyl phosphate + 4-amino-2-methyl-5-(diphosphooxymethyl)pyrimidine + 2 H(+) = thiamine phosphate + CO2 + diphosphate. The catalysed reaction is 2-(2-carboxy-4-methylthiazol-5-yl)ethyl phosphate + 4-amino-2-methyl-5-(diphosphooxymethyl)pyrimidine + 2 H(+) = thiamine phosphate + CO2 + diphosphate. It carries out the reaction 4-methyl-5-(2-phosphooxyethyl)-thiazole + 4-amino-2-methyl-5-(diphosphooxymethyl)pyrimidine + H(+) = thiamine phosphate + diphosphate. It participates in cofactor biosynthesis; thiamine diphosphate biosynthesis; thiamine phosphate from 4-amino-2-methyl-5-diphosphomethylpyrimidine and 4-methyl-5-(2-phosphoethyl)-thiazole: step 1/1. In terms of biological role, condenses 4-methyl-5-(beta-hydroxyethyl)thiazole monophosphate (THZ-P) and 2-methyl-4-amino-5-hydroxymethyl pyrimidine pyrophosphate (HMP-PP) to form thiamine monophosphate (TMP). The sequence is that of Thiamine-phosphate synthase from Synechococcus sp. (strain WH7803).